A 310-amino-acid chain; its full sequence is Isoflavone reductase homolog A622 (310 aa).

Residues 13–19 (GGTGYIG), R38, and K47 each bind NADP(+). Residue K135 is the Proton acceptor of the active site. Position 139 (R139) interacts with NADP(+).

The protein belongs to the NmrA-type oxidoreductase family. Isoflavone reductase subfamily. Monomer.

It localises to the cytoplasm. It participates in alkaloid biosynthesis; nicotine biosynthesis. Its function is as follows. NADPH-binding protein. Involved in the biosynthesis of pyridine alkaloid natural products, leading mainly to the production of anabasine, anatabine, nicotine and nornicotine, effective deterrents against herbivores with antiparasitic and pesticide properties (neurotoxins); nornicotine serves as the precursor in the synthesis of the carcinogen compound N'-nitrosonornicotine (NNN). Reductase involved in a late step of tobacco alkaloid biosynthesis. Triggers either the formation of a nicotinic acid-derived precursor or the final condensation reaction of tobacco alkaloids. This is Isoflavone reductase homolog A622 from Nicotiana glauca (Glaucous tobacco).